Reading from the N-terminus, the 198-residue chain is Hookworm platelet inhibitor 1 (198 aa).

Residues 1-17 (MSSYLLVLVAILGFAYA) form the signal peptide. Intrachain disulfides connect Cys24–Cys65, Cys78–Cys146, Cys141–Cys154, Cys174–Cys186, and Cys177–Cys195.

The protein belongs to the CRISP family. Monomer. As to expression, detected in cephalic glands.

Its subcellular location is the secreted. In terms of biological role, hookworms inhibitor of platelet aggregation and adhesion. Native protein inhibits platelet aggregation induced by ADP, epinephrine, and thrombin. In addition, it prevents adhesion of resting platelets to immobilized fibrinogen and collagen. May act by binding to glycoprotein IIb/IIIa (ITGA2B/ITGB3) and integrin alpha-2/beta-1 (ITGA1/ITGB1), respectively. It is noteworthy that the recombinant protein fails to inhibit binding to fibrinogen (through ITGA2B/ITGB3) and collagen (through ITGA1/ITGB1). This is Hookworm platelet inhibitor 1 from Ancylostoma caninum (Dog hookworm).